Here is a 202-residue protein sequence, read N- to C-terminus: Alpha-latrotoxin-Lm1a (202 aa).

ANK repeat units lie at residues 95–109 (LYNAASNPDSAVGFK), 110–120 (LMESPEININE), 122–132 (NDWPVASTLLR), 133–138 (SSNVNV), 142–161 (NSDTPLNLAYFIDQGADINT), 163–170 (NGHLNIVK), 171–182 (YLVEEEDLSVDG), lysine 184, 185–191 (YGIDMTI), and 193–202 (TALDIATDLK). A 4C4.1 epitope region spans residues 175–181 (EEDLSVD).

This sequence belongs to the cationic peptide 01 (latrotoxin) family. 03 (alpha-latrotoxin) subfamily. As to quaternary structure, homotetramer in membranes. In terms of processing, processed by furin-like proteases at both the N- and C-termini. Contains 1 disulfide bond. Expressed in venom gland, cephalothorax, and abdomen tissues from both males and females.

Its subcellular location is the secreted. The protein resides in the target cell membrane. Functionally, presynaptic neurotoxin that causes massive release of neurotransmitters from vertebrate (but not invertebrate) nerve terminals and endocrine cells via a complex mechanism involving activation of receptor(s) and toxin insertion into the plasma membrane with subsequent pore formation. Binds to neurexin-1-alpha (NRXN1) in a calcium dependent manner, adhesion G protein-coupled receptor L1 (ADGRL1, also termed latrophilin-1 and calcium-independent receptor of latrotoxin (CIRL)), and receptor-type tyrosine-protein phosphatase S (PTPRS), also termed PTP sigma. NRXN1 and PTPRS are suggested to provide a platform for binding and subsequent pore formation events. In contrast, binding to ADGRL1 does not involve oligomerization and channel formation, but direct downstream stimulation of the synaptic fusion machinery. This chain is Alpha-latrotoxin-Lm1a, found in Latrodectus mactans (Black widow spider).